We begin with the raw amino-acid sequence, 485 residues long: Glutamate--tRNA ligase (485 aa).

The short motif at 11-21 is the 'HIGH' region element; it reads PSPTGYMHVGN. Residues C108, C110, C135, and D137 each coordinate Zn(2+). Positions 252 to 256 match the 'KMSKS' region motif; that stretch reads KLSKR. ATP is bound at residue K255.

The protein belongs to the class-I aminoacyl-tRNA synthetase family. Glutamate--tRNA ligase type 1 subfamily. As to quaternary structure, monomer. The cofactor is Zn(2+).

The protein localises to the cytoplasm. It catalyses the reaction tRNA(Glu) + L-glutamate + ATP = L-glutamyl-tRNA(Glu) + AMP + diphosphate. Its function is as follows. Catalyzes the attachment of glutamate to tRNA(Glu) in a two-step reaction: glutamate is first activated by ATP to form Glu-AMP and then transferred to the acceptor end of tRNA(Glu). The protein is Glutamate--tRNA ligase of Clostridium botulinum (strain Okra / Type B1).